The primary structure comprises 359 residues: Fructose-bisphosphate aldolase (359 aa).

The residue at position 11 (Thr11) is a Phosphothreonine. Lys27 is covalently cross-linked (Glycyl lysine isopeptide (Lys-Gly) (interchain with G-Cter in ubiquitin)). A phosphoserine mark is found at Ser56 and Ser63. Ser63 lines the D-glyceraldehyde 3-phosphate pocket. Residue Lys73 forms a Glycyl lysine isopeptide (Lys-Gly) (interchain with G-Cter in ubiquitin) linkage. 2 positions are modified to phosphoserine: Ser76 and Ser83. Lys85 is covalently cross-linked (Glycyl lysine isopeptide (Lys-Gly) (interchain with G-Cter in ubiquitin)). A Phosphoserine modification is found at Ser96. The Proton donor role is filled by Asp110. His111 and Asp145 together coordinate Zn(2+). Ser147 is subject to Phosphoserine. The residue at position 150 (Thr150) is a Phosphothreonine. Glu175 serves as a coordination point for Zn(2+). The residue at position 179 (Thr179) is a Phosphothreonine. His227 lines the Zn(2+) pocket. Gly228 is a dihydroxyacetone phosphate binding site. His265 is a binding site for Zn(2+). Dihydroxyacetone phosphate-binding positions include 266–268 (GGS) and 287–290 (NLDT). Ser268 bears the Phosphoserine mark. Thr290 bears the Phosphothreonine mark. A Glycyl lysine isopeptide (Lys-Gly) (interchain with G-Cter in ubiquitin) cross-link involves residue Lys308. Residue Tyr310 is modified to Phosphotyrosine. Phosphoserine is present on Ser313.

The protein belongs to the class II fructose-bisphosphate aldolase family. As to quaternary structure, homodimer. The cofactor is Zn(2+).

It carries out the reaction beta-D-fructose 1,6-bisphosphate = D-glyceraldehyde 3-phosphate + dihydroxyacetone phosphate. It functions in the pathway carbohydrate degradation; glycolysis; D-glyceraldehyde 3-phosphate and glycerone phosphate from D-glucose: step 4/4. Its function is as follows. Catalyzes the aldol condensation of dihydroxyacetone phosphate (DHAP or glycerone-phosphate) with glyceraldehyde 3-phosphate (G3P) to form fructose 1,6-bisphosphate (FBP) in gluconeogenesis and the reverse reaction in glycolysis. The polypeptide is Fructose-bisphosphate aldolase (FBA1) (Saccharomyces cerevisiae (strain ATCC 204508 / S288c) (Baker's yeast)).